Consider the following 33-residue polypeptide: Brevinin-2Eb (33 aa).

C27 and C33 are oxidised to a cystine.

This sequence belongs to the frog skin active peptide (FSAP) family. Brevinin subfamily. In terms of tissue distribution, expressed by the skin glands.

It is found in the secreted. Its function is as follows. Shows antibacterial activity against representative Gram-negative and Gram-positive bacterial species, and hemolytic activity. This is Brevinin-2Eb from Pelophylax lessonae (Pool frog).